Consider the following 121-residue polypeptide: Large ribosomal subunit protein uL18 (121 aa).

The protein belongs to the universal ribosomal protein uL18 family. In terms of assembly, part of the 50S ribosomal subunit; part of the 5S rRNA/L5/L18/L25 subcomplex. Contacts the 5S and 23S rRNAs.

Its function is as follows. This is one of the proteins that bind and probably mediate the attachment of the 5S RNA into the large ribosomal subunit, where it forms part of the central protuberance. The protein is Large ribosomal subunit protein uL18 of Paraburkholderia phymatum (strain DSM 17167 / CIP 108236 / LMG 21445 / STM815) (Burkholderia phymatum).